The sequence spans 1531 residues: DNA topoisomerase 2-alpha (1531 aa).

Met1 carries the N-acetylmethionine modification. Position 4 is a phosphoserine (Ser4). A Glycyl lysine isopeptide (Lys-Gly) (interchain with G-Cter in SUMO2) cross-link involves residue Lys17. Residues Asn91, Asn120, and 148 to 150 (SSN) each bind ATP. Residues Lys156 and Lys157 each participate in a glycyl lysine isopeptide (Lys-Gly) (interchain with G-Cter in SUMO2) cross-link. Position 161–168 (161–168 (GRNGYGAK)) interacts with ATP. A Glycyl lysine isopeptide (Lys-Gly) (interchain with G-Cter in SUMO2) cross-link involves residue Lys261. The residue at position 282 (Thr282) is a Phosphothreonine. The tract at residues 342 to 344 (KKK) is interaction with DNA. Residue Lys352 forms a Glycyl lysine isopeptide (Lys-Gly) (interchain with G-Cter in SUMO2) linkage. 376–378 (QTK) contacts ATP. Residues Lys386, Lys397, Lys416, Lys418, Lys425, and Lys440 each participate in a glycyl lysine isopeptide (Lys-Gly) (interchain with G-Cter in SUMO2) cross-link. A Toprim domain is found at 455 to 572 (CTLILTEGDS…SLLRHRFLEE (118 aa)). Glu461 is a Mg(2+) binding site. Glycyl lysine isopeptide (Lys-Gly) (interchain with G-Cter in SUMO2) cross-links involve residues Lys466, Lys480, and Lys529. Positions 541 and 543 each coordinate Mg(2+). Glycyl lysine isopeptide (Lys-Gly) (interchain with G-Cter in SUMO2) cross-links involve residues Lys584, Lys599, Lys614, Lys622, Lys625, Lys632, Lys639, Lys655, Lys662, and Lys676. Residues 715–1171 (IPSMVDGLKP…SPSDLWKEDL (457 aa)) form the Topo IIA-type catalytic domain. Tyr805 serves as the catalytic O-(5'-phospho-DNA)-tyrosine intermediate. Positions 990–999 (KLQTSLTCNS) are interaction with DNA. Positions 1018 to 1028 (ILRDFFELRLK) match the Nuclear export signal motif. A Glycyl lysine isopeptide (Lys-Gly) (interchain with G-Cter in SUMO2) cross-link involves residue Lys1075. 2 disordered regions span residues 1090–1123 (WKEA…DSGP) and 1184–1531 (KEKQ…DDLF). The segment covering 1099–1108 (DEEENEESDN) has biased composition (acidic residues). A Phosphoserine; by CK1 modification is found at Ser1106. Residues Lys1114, Lys1196, and Lys1204 each participate in a glycyl lysine isopeptide (Lys-Gly) (interchain with G-Cter in SUMO2) cross-link. Thr1205 is modified (phosphothreonine). Ser1213 carries the phosphoserine modification. Residue Lys1228 forms a Glycyl lysine isopeptide (Lys-Gly) (interchain with G-Cter in SUMO2) linkage. Residue Lys1240 forms a Glycyl lysine isopeptide (Lys-Gly) (interchain with G-Cter in SUMO1); alternate linkage. Residue Lys1240 forms a Glycyl lysine isopeptide (Lys-Gly) (interchain with G-Cter in SUMO2); alternate linkage. Thr1244 carries the post-translational modification Phosphothreonine. Ser1247 carries the phosphoserine modification. A compositionally biased stretch (basic and acidic residues) spans 1256–1272 (EGLKQRLEKKQKREPGT). Glycyl lysine isopeptide (Lys-Gly) (interchain with G-Cter in SUMO2) cross-links involve residues Lys1259, Lys1276, Lys1283, and Lys1286. Residues Ser1295, Ser1297, Ser1299, and Ser1302 each carry the phosphoserine modification. Position 1327 is a phosphothreonine (Thr1327). Acidic residues predominate over residues 1330 to 1349 (LDSDEDFSDFDEKTDDEDFV). Ser1332 and Ser1337 each carry phosphoserine. Residue Thr1343 is modified to Phosphothreonine; by PLK3. Phosphoserine is present on residues Ser1351 and Ser1354. Residues Lys1363, Lys1367, and Lys1373 each participate in a glycyl lysine isopeptide (Lys-Gly) (interchain with G-Cter in SUMO2) cross-link. Ser1374 and Ser1377 each carry phosphoserine. A Glycyl lysine isopeptide (Lys-Gly) (interchain with G-Cter in SUMO2) cross-link involves residue Lys1385. A phosphoserine mark is found at Ser1387, Ser1391, Ser1392, and Ser1393. Over residues 1406–1431 (TNPVPKKNVTVKKTAAKSQSSTSTTG) the composition is skewed to low complexity. A Glycyl lysine isopeptide (Lys-Gly) (interchain with G-Cter in SUMO2); alternate cross-link involves residue Lys1422. Position 1422 is an N6-acetyllysine; alternate (Lys1422). An interaction with PLSCR1 region spans residues 1433–1439 (KKRAAPK). Lys1442 is covalently cross-linked (Glycyl lysine isopeptide (Lys-Gly) (interchain with G-Cter in SUMO2); alternate). Lys1442 is subject to N6-acetyllysine; alternate. Position 1449 is a phosphoserine (Ser1449). Glycyl lysine isopeptide (Lys-Gly) (interchain with G-Cter in SUMO2) cross-links involve residues Lys1454 and Lys1459. Residue Ser1469 is modified to Phosphoserine; by CK2. Thr1470 bears the Phosphothreonine mark. Ser1471, Ser1474, and Ser1476 each carry phosphoserine. Glycyl lysine isopeptide (Lys-Gly) (interchain with G-Cter in SUMO2) cross-links involve residues Lys1484 and Lys1492. Over residues 1491 to 1502 (SKGESDDFHMDF) the composition is skewed to basic and acidic residues. Residues Ser1495, Ser1504, and Ser1525 each carry the phosphoserine modification.

The protein belongs to the type II topoisomerase family. Homodimer. Interacts with COPS5. Interacts with RECQL5; this stimulates DNA decatenation. Interacts with SETMAR; stimulates the topoisomerase activity. Interacts with DHX9; this interaction occurs in a E2 enzyme UBE2I- and RNA-dependent manner, negatively regulates DHX9-mediated double-stranded DNA and RNA duplex helicase activity and stimulates TOP2A-mediated supercoiled DNA relaxation activity. Interacts with HNRNPU (via C-terminus); this interaction protects the topoisomerase TOP2A from degradation and positively regulates the relaxation of supercoiled DNA in a RNA-dependent manner. Interacts with MCM3AP isoform GANP. Interacts with ERCC6. Interacts with PLSCR1. Interacts with GCNA; this interaction allows the resolution of topoisomerase II (TOP2A) DNA-protein cross-links. Interacts with POL1RA/RPA1 (via dock II) and UBTF in the context of Pol I complex; may assist Pol I transcription initiation by releasing supercoils occurring during DNA unwinding. Interacts with TPRN; TPRN interacts with a number of DNA damage response proteins, is recruited to sites of DNA damage and may play a role in DNA damage repair. Mg(2+) serves as cofactor. Requires Mn(2+) as cofactor. Ca(2+) is required as a cofactor. Phosphorylation has no effect on catalytic activity. However, phosphorylation at Ser-1106 by CSNK1D/CK1 promotes DNA cleavable complex formation. Post-translationally, (Microbial infection) Deubiquitinated by Epstein-Barr virus BPLF1; leading to stabilized SUMOylated TOP2A trapped in cleavage complexes, which halts the DNA damage response to TOP2A-induced double-strand DNA breaks. In terms of processing, SUMOylated. As to expression, expressed in the tonsil, spleen, lymph node, thymus, skin, pancreas, testis, colon, kidney, liver, brain and lung. Also found in high-grade lymphomas, squamous cell lung tumors and seminomas.

The protein localises to the cytoplasm. It is found in the nucleus. Its subcellular location is the nucleoplasm. It localises to the nucleolus. The catalysed reaction is ATP-dependent breakage, passage and rejoining of double-stranded DNA.. Its activity is regulated as follows. Specifically inhibited by the intercalating agent amsacrine. Functionally, key decatenating enzyme that alters DNA topology by binding to two double-stranded DNA molecules, generating a double-stranded break in one of the strands, passing the intact strand through the broken strand, and religating the broken strand. May play a role in regulating the period length of BMAL1 transcriptional oscillation. The sequence is that of DNA topoisomerase 2-alpha (TOP2A) from Homo sapiens (Human).